A 178-amino-acid chain; its full sequence is FXYD domain-containing ion transport regulator 5 (178 aa).

An N-terminal signal peptide occupies residues 1 to 21 (MSPSGRLCLLTIVGLILPTRG). Over 22–145 (QTLKDTTSSS…FYDEHTLRKR (124 aa)) the chain is Extracellular. A disordered region spans residues 23 to 131 (TLKDTTSSSS…QTLKPSGFHE (109 aa)). Composition is skewed to low complexity over residues 26–36 (DTTSSSSADST) and 68–77 (TPQPQTQTQQ). Positions 103 to 125 (DTTTLSERPSPSTDVQTDPQTLK) are enriched in polar residues. Residues 146–164 (GLLVAAVLFITGIIILTSG) form a helical membrane-spanning segment. The Cytoplasmic segment spans residues 165–178 (KCRQLSRLCRNRCR).

Belongs to the FXYD family. Regulatory subunit of the sodium/potassium-transporting ATPase which is composed of a catalytic alpha subunit, a non-catalytic beta subunit and an additional regulatory subunit. The regulatory subunit, a member of the FXYD protein family, modulates the enzymatic activity in a tissue- and isoform-specific way by changing affinities of the Na+/K+-ATPase toward Na(+), K(+) or ATP. In terms of processing, glycosylated.

It localises to the cell membrane. Its subcellular location is the basolateral cell membrane. Functionally, associates with and regulates the activity of the sodium/potassium-transporting ATPase (NKA) which catalyzes the hydrolysis of ATP coupled with the exchange of Na(+) and K(+) ions across the plasma membrane. May increase NKA activity by increasing the apparent affinity for Na(+). Involved in down-regulation of E-cadherin which results in reduced cell adhesion. Promotes metastasis. The chain is FXYD domain-containing ion transport regulator 5 (FXYD5) from Homo sapiens (Human).